A 447-amino-acid polypeptide reads, in one-letter code: N-succinylarginine dihydrolase (447 aa).

Substrate contacts are provided by residues 19-28 (AGLSFGNEAS), Asn-110, and 137-138 (HR). Glu-174 is a catalytic residue. Arg-212 lines the substrate pocket. His-248 is a catalytic residue. Residues Asp-250 and Asn-359 each coordinate substrate. Cys-365 (nucleophile) is an active-site residue.

The protein belongs to the succinylarginine dihydrolase family. Homodimer.

It carries out the reaction N(2)-succinyl-L-arginine + 2 H2O + 2 H(+) = N(2)-succinyl-L-ornithine + 2 NH4(+) + CO2. It participates in amino-acid degradation; L-arginine degradation via AST pathway; L-glutamate and succinate from L-arginine: step 2/5. Catalyzes the hydrolysis of N(2)-succinylarginine into N(2)-succinylornithine, ammonia and CO(2). This Salmonella enteritidis PT4 (strain P125109) protein is N-succinylarginine dihydrolase.